The sequence spans 467 residues: ATP synthase subunit beta (467 aa).

Residue 154–161 (GGAGVGKT) participates in ATP binding.

Belongs to the ATPase alpha/beta chains family. As to quaternary structure, F-type ATPases have 2 components, CF(1) - the catalytic core - and CF(0) - the membrane proton channel. CF(1) has five subunits: alpha(3), beta(3), gamma(1), delta(1), epsilon(1). CF(0) has three main subunits: a(1), b(2) and c(9-12). The alpha and beta chains form an alternating ring which encloses part of the gamma chain. CF(1) is attached to CF(0) by a central stalk formed by the gamma and epsilon chains, while a peripheral stalk is formed by the delta and b chains.

It localises to the cell inner membrane. It catalyses the reaction ATP + H2O + 4 H(+)(in) = ADP + phosphate + 5 H(+)(out). In terms of biological role, produces ATP from ADP in the presence of a proton gradient across the membrane. The catalytic sites are hosted primarily by the beta subunits. The sequence is that of ATP synthase subunit beta from Leptospira interrogans serogroup Icterohaemorrhagiae serovar copenhageni (strain Fiocruz L1-130).